A 204-amino-acid polypeptide reads, in one-letter code: Thioredoxin-like 4, chloroplastic (204 aa).

The N-terminal 27 residues, 1–27 (MSSLLNISHCSYHGYSGLTSRGGINTV), are a transit peptide targeting the chloroplast. In terms of domain architecture, Thioredoxin spans 63–201 (AKSLSQENLV…IDAAILKYTS (139 aa)). Active-site nucleophile residues include cysteine 119 and cysteine 122. A disulfide bridge links cysteine 119 with cysteine 122.

This sequence belongs to the thioredoxin family.

It localises to the plastid. It is found in the chloroplast. Its function is as follows. Probable thiol-disulfide oxidoreductase that may participate in various redox reactions. This is Thioredoxin-like 4, chloroplastic from Arabidopsis thaliana (Mouse-ear cress).